Here is a 225-residue protein sequence, read N- to C-terminus: Phosphoribosylformylglycinamidine synthase subunit PurQ (225 aa).

One can recognise a Glutamine amidotransferase type-1 domain in the interval 4 to 225 (RIGVITFPGT…LSVLDTLVTA (222 aa)). Cysteine 87 acts as the Nucleophile in catalysis. Catalysis depends on residues histidine 196 and glutamate 198.

As to quaternary structure, part of the FGAM synthase complex composed of 1 PurL, 1 PurQ and 2 PurS subunits.

Its subcellular location is the cytoplasm. It catalyses the reaction N(2)-formyl-N(1)-(5-phospho-beta-D-ribosyl)glycinamide + L-glutamine + ATP + H2O = 2-formamido-N(1)-(5-O-phospho-beta-D-ribosyl)acetamidine + L-glutamate + ADP + phosphate + H(+). The catalysed reaction is L-glutamine + H2O = L-glutamate + NH4(+). The protein operates within purine metabolism; IMP biosynthesis via de novo pathway; 5-amino-1-(5-phospho-D-ribosyl)imidazole from N(2)-formyl-N(1)-(5-phospho-D-ribosyl)glycinamide: step 1/2. Its function is as follows. Part of the phosphoribosylformylglycinamidine synthase complex involved in the purines biosynthetic pathway. Catalyzes the ATP-dependent conversion of formylglycinamide ribonucleotide (FGAR) and glutamine to yield formylglycinamidine ribonucleotide (FGAM) and glutamate. The FGAM synthase complex is composed of three subunits. PurQ produces an ammonia molecule by converting glutamine to glutamate. PurL transfers the ammonia molecule to FGAR to form FGAM in an ATP-dependent manner. PurS interacts with PurQ and PurL and is thought to assist in the transfer of the ammonia molecule from PurQ to PurL. In Nocardia farcinica (strain IFM 10152), this protein is Phosphoribosylformylglycinamidine synthase subunit PurQ.